The primary structure comprises 160 residues: Sec-independent protein translocase protein TatB (160 aa).

A helical transmembrane segment spans residues 1-21 (MIDLGVSKIALIGAVALIVIG). 2 disordered regions span residues 70 to 100 (ARDV…STAT) and 133 to 160 (RSGV…SSSF). Positions 89–100 (SDATGSDASTAT) are enriched in polar residues.

This sequence belongs to the TatB family. The Tat system comprises two distinct complexes: a TatABC complex, containing multiple copies of TatA, TatB and TatC subunits, and a separate TatA complex, containing only TatA subunits. Substrates initially bind to the TatABC complex, which probably triggers association of the separate TatA complex to form the active translocon.

It localises to the cell inner membrane. Functionally, part of the twin-arginine translocation (Tat) system that transports large folded proteins containing a characteristic twin-arginine motif in their signal peptide across membranes. Together with TatC, TatB is part of a receptor directly interacting with Tat signal peptides. TatB may form an oligomeric binding site that transiently accommodates folded Tat precursor proteins before their translocation. The protein is Sec-independent protein translocase protein TatB of Polaromonas sp. (strain JS666 / ATCC BAA-500).